The following is a 741-amino-acid chain: MAVLDTDLDHILPSSVLPPFWAKLVVGSVAIVCFARSYDGDFVFDDSEAIVNNKDLQAETPLGDLWHHDFWGSRLSSNTSHKSYRPLTVLTFRINYYLSGGFHPVGFHVVNILLHSGISVLMVDVFSVLFGGLQYTSKGRRLHLAPRASLLAALLFAVHPVHTECVAGVVGRADLLCALFFLLSFLGYCKAFRESNKEGAHSSTFWVLLSIFLGAVAMLCKEQGITVLGLNAVFDILVIGKFNVLEIVQKVLHKDKSLENLGMLRNGGLLFRMTLLTSGGAGMLYVRWRIMGTGPPAFTEVDNPASFADSMLVRAVNYNYYYSLNAWLLLCPWWLCFDWSMGCIPLIKSISDWRVIALAALWFCLIGLICQALCSEDGHKRRILTLGLGFLVIPFLPASNLFFRVGFVVAERVLYLPSVGYCVLLTFGFGALSKHTKKKKLIAAVVLGILFINTLRCVLRSGEWRSEEQLFRSALSVCPLNAKVHYNIGKNLADKGNQTAAIRYYREAVRLNPKYVHAMNNLGNILKERNELQEAEELLSLAVQIQPDFAAAWMNLGIVQNSLKRFEAAEQSYRTAIKHRRKYPDCYYNLGRLYADLNRHVDALNAWRNATVLKPEHSLAWNNMIILLDNTGNLAQAEAVGREALELIPNDHSLMFSLANVLGKSQKYKESEALFLKAIKANPNAASYHGNLAVLYHRWGHLDLAKKHYEISLQLDPTASGTKENYGLLRRKLELMQKKAV.

Topologically, residues 1 to 14 (MAVLDTDLDHILPS) are cytoplasmic. The helical transmembrane segment at 15 to 35 (SVLPPFWAKLVVGSVAIVCFA) threads the bilayer. Residues 36–111 (RSYDGDFVFD…FHPVGFHVVN (76 aa)) are Extracellular-facing. Asparagine 78 carries an N-linked (GlcNAc...) asparagine glycan. A helical membrane pass occupies residues 112–132 (ILLHSGISVLMVDVFSVLFGG). Residues 133–141 (LQYTSKGRR) are Cytoplasmic-facing. Residues 142–162 (LHLAPRASLLAALLFAVHPVH) form a helical membrane-spanning segment. The Extracellular portion of the chain corresponds to 163–165 (TEC). Residues 166 to 186 (VAGVVGRADLLCALFFLLSFL) form a helical membrane-spanning segment. Residues 187-198 (GYCKAFRESNKE) lie on the Cytoplasmic side of the membrane. Residues 199–219 (GAHSSTFWVLLSIFLGAVAML) form a helical membrane-spanning segment. Over 220–224 (CKEQG) the chain is Extracellular. A helical membrane pass occupies residues 225 to 245 (ITVLGLNAVFDILVIGKFNVL). The Cytoplasmic portion of the chain corresponds to 246–268 (EIVQKVLHKDKSLENLGMLRNGG). The helical transmembrane segment at 269–288 (LLFRMTLLTSGGAGMLYVRW) threads the bilayer. The Extracellular segment spans residues 289 to 354 (RIMGTGPPAF…PLIKSISDWR (66 aa)). Residues 355-375 (VIALAALWFCLIGLICQALCS) form a helical membrane-spanning segment. The Cytoplasmic portion of the chain corresponds to 376–382 (EDGHKRR). Residues 383 to 403 (ILTLGLGFLVIPFLPASNLFF) traverse the membrane as a helical segment. Residues 404 to 412 (RVGFVVAER) lie on the Extracellular side of the membrane. A helical transmembrane segment spans residues 413–433 (VLYLPSVGYCVLLTFGFGALS). Over 434 to 440 (KHTKKKK) the chain is Cytoplasmic. Residues 441 to 461 (LIAAVVLGILFINTLRCVLRS) traverse the membrane as a helical segment. The Extracellular segment spans residues 462-741 (GEWRSEEQLF…KLELMQKKAV (280 aa)). TPR repeat units follow at residues 482–515 (AKVH…NPKY), 516–549 (VHAM…QPDF), 550–583 (AAAW…RRKY), 584–617 (PDCY…KPEH), 618–651 (SLAW…IPND), 652–685 (HSLM…NPNA), and 686–719 (ASYH…DPTA). Asparagine 497 carries an N-linked (GlcNAc...) asparagine glycan. A glycan (N-linked (GlcNAc...) asparagine) is linked at asparagine 609.

Belongs to the TMTC family.

It is found in the membrane. The protein resides in the endoplasmic reticulum. The enzyme catalyses a di-trans,poly-cis-dolichyl beta-D-mannosyl phosphate + L-seryl-[protein] = 3-O-(alpha-D-mannosyl)-L-seryl-[protein] + a di-trans,poly-cis-dolichyl phosphate + H(+). It carries out the reaction a di-trans,poly-cis-dolichyl beta-D-mannosyl phosphate + L-threonyl-[protein] = 3-O-(alpha-D-mannosyl)-L-threonyl-[protein] + a di-trans,poly-cis-dolichyl phosphate + H(+). Its pathway is protein modification; protein glycosylation. Functionally, transfers mannosyl residues to the hydroxyl group of serine or threonine residues. The 4 members of the TMTC family are O-mannosyl-transferases dedicated primarily to the cadherin superfamily, each member seems to have a distinct role in decorating the cadherin domains with O-linked mannose glycans at specific regions. Also acts as O-mannosyl-transferase on other proteins such as PDIA3. The chain is Protein O-mannosyl-transferase TMTC4 from Homo sapiens (Human).